The primary structure comprises 197 residues: Phosphoheptose isomerase (197 aa).

The SIS domain maps to 34-196 (MVQCLLGGNK…DRTLFPQDEQ (163 aa)). Residue 49–51 (NGG) participates in substrate binding. 2 residues coordinate Zn(2+): H58 and E62. Residues E62, 91–92 (ND), 117–119 (STS), S122, and Q172 each bind substrate. The Zn(2+) site is built by Q172 and H180.

This sequence belongs to the SIS family. GmhA subfamily. Homotetramer. The cofactor is Zn(2+).

It localises to the cytoplasm. It carries out the reaction 2 D-sedoheptulose 7-phosphate = D-glycero-alpha-D-manno-heptose 7-phosphate + D-glycero-beta-D-manno-heptose 7-phosphate. The protein operates within carbohydrate biosynthesis; D-glycero-D-manno-heptose 7-phosphate biosynthesis; D-glycero-alpha-D-manno-heptose 7-phosphate and D-glycero-beta-D-manno-heptose 7-phosphate from sedoheptulose 7-phosphate: step 1/1. In terms of biological role, catalyzes the isomerization of sedoheptulose 7-phosphate in D-glycero-D-manno-heptose 7-phosphate. In Shewanella oneidensis (strain ATCC 700550 / JCM 31522 / CIP 106686 / LMG 19005 / NCIMB 14063 / MR-1), this protein is Phosphoheptose isomerase.